Here is a 350-residue protein sequence, read N- to C-terminus: Biotin synthase (350 aa).

In terms of domain architecture, Radical SAM core spans 38 to 256 (NHVQVSTLLS…IAVARIMMPK (219 aa)). Positions 53, 57, and 60 each coordinate [4Fe-4S] cluster. [2Fe-2S] cluster contacts are provided by Cys-97, Cys-128, Cys-188, and Arg-260.

This sequence belongs to the radical SAM superfamily. Biotin synthase family. Homodimer. [4Fe-4S] cluster is required as a cofactor. It depends on [2Fe-2S] cluster as a cofactor.

The catalysed reaction is (4R,5S)-dethiobiotin + (sulfur carrier)-SH + 2 reduced [2Fe-2S]-[ferredoxin] + 2 S-adenosyl-L-methionine = (sulfur carrier)-H + biotin + 2 5'-deoxyadenosine + 2 L-methionine + 2 oxidized [2Fe-2S]-[ferredoxin]. It functions in the pathway cofactor biosynthesis; biotin biosynthesis; biotin from 7,8-diaminononanoate: step 2/2. Functionally, catalyzes the conversion of dethiobiotin (DTB) to biotin by the insertion of a sulfur atom into dethiobiotin via a radical-based mechanism. The sequence is that of Biotin synthase from Vibrio cholerae serotype O1 (strain ATCC 39541 / Classical Ogawa 395 / O395).